We begin with the raw amino-acid sequence, 94 residues long: Protein SKIP34 (94 aa).

A disordered region spans residues 1–27 (MCYGHNQSLSSRSSLRRRSHDGEDDSV). A coiled-coil region spans residues 23-61 (EDDSVVDDLRDRLAETEARLRRARAREAELSRRLEHMKR).

Interacts with SPK1B/ASK2.

This Arabidopsis thaliana (Mouse-ear cress) protein is Protein SKIP34 (SKIP34).